We begin with the raw amino-acid sequence, 446 residues long: Fatty acid desaturase 2 (446 aa).

Residues 1–132 (MGMGGQSGEG…EDMRLFKSNP (132 aa)) lie on the Cytoplasmic side of the membrane. Residues 20-97 (EAQYSWEEIQ…LKPLYIGELA (78 aa)) form the Cytochrome b5 heme-binding domain. Residues 133–153 (AFFIFYLFHILLIEFLAWCTL) traverse the membrane as a helical segment. Residue H154 is a topological domain, lumenal. The helical transmembrane segment at 155-175 (YLGTGWIPAIITVLLLTISQA) threads the bilayer. Topologically, residues 176 to 265 (QAGWLQHDFG…IKYLPYNHQH (90 aa)) are cytoplasmic. The Histidine box-1 motif lies at 182 to 186 (HDFGH). The Histidine box-2 motif lies at 219–223 (HFQHH). The helical transmembrane segment at 266 to 286 (LYFFLIGPPLLIPVYFTVQII) threads the bilayer. At 287 to 307 (KTMIARKDWVDLAWSVSYYVR) the chain is on the lumenal side. A helical membrane pass occupies residues 308–328 (FFFTFVPFFGVLGSLALLNAV). The Cytoplasmic portion of the chain corresponds to 329–446 (RFFESHWFVW…QLWLDAYLHK (118 aa)). A Histidine box-3 motif is present at residues 384-388 (QIEHH).

The protein belongs to the fatty acid desaturase type 1 family.

Its subcellular location is the endoplasmic reticulum membrane. The protein operates within lipid metabolism; polyunsaturated fatty acid biosynthesis. Component of a lipid metabolic pathway that catalyzes biosynthesis of highly unsaturated fatty acids (HUFA) from precursor essential polyunsaturated fatty acids (PUFA) linoleic acid (LA) (18:2n-6) and alpha-linolenic acid (ALA) (18:3n-3). Catalyzes the first and rate limiting step in this pathway which is the desaturation of LA (18:2n-6) and ALA (18:3n-3) into gamma-linoleic acid (GLA) (18:3n-6) and stearidonic acid (18:4n-3) respectively and other desaturation steps. Highly unsaturated fatty acids (HUFA) play pivotal roles in many biological functions. The protein is Fatty acid desaturase 2 (fads2) of Xenopus laevis (African clawed frog).